The sequence spans 499 residues: Na(+)/H(+) antiporter NhaB (499 aa).

12 consecutive transmembrane segments (helical) span residues 38-58 (VSPF…LAMA), 62-82 (YPLQ…LTSA), 89-109 (VLAN…IYFM), 128-148 (LLLS…LDAL), 149-169 (TVTA…HRFA), 204-224 (LIMH…VGEP), 242-262 (LVMA…CAIL), 310-330 (VLVF…LLII), 349-369 (FEEA…VAVI), 393-413 (MFFV…VATV), 449-469 (ATPN…APLI), and 478-498 (IMAL…VILF).

The protein belongs to the NhaB Na(+)/H(+) (TC 2.A.34) antiporter family.

It localises to the cell inner membrane. The enzyme catalyses 2 Na(+)(in) + 3 H(+)(out) = 2 Na(+)(out) + 3 H(+)(in). In terms of biological role, na(+)/H(+) antiporter that extrudes sodium in exchange for external protons. The polypeptide is Na(+)/H(+) antiporter NhaB (Saccharophagus degradans (strain 2-40 / ATCC 43961 / DSM 17024)).